Consider the following 330-residue polypeptide: Probable NAD(P)H-dependent D-xylose reductase xyl1 (330 aa).

The Proton donor role is filled by tyrosine 50. Residue histidine 112 participates in substrate binding. Residues 166–167 (SN), 215–224 (SSFGPLSFLE), and 271–281 (KSNNPTRLAQN) each bind NAD(+).

It belongs to the aldo/keto reductase family.

It catalyses the reaction xylitol + NAD(+) = D-xylose + NADH + H(+). It carries out the reaction xylitol + NADP(+) = D-xylose + NADPH + H(+). It participates in carbohydrate metabolism; D-xylose degradation. In terms of biological role, catalyzes the initial reaction in the xylose utilization pathway by reducing D-xylose into xylitol. Xylose is a major component of hemicelluloses such as xylan. Most fungi utilize D-xylose via three enzymatic reactions, xylose reductase (XR), xylitol dehydrogenase (XDH), and xylulokinase, to form xylulose 5-phosphate, which enters pentose phosphate pathway. This chain is Probable NAD(P)H-dependent D-xylose reductase xyl1 (xyl1), found in Aspergillus clavatus (strain ATCC 1007 / CBS 513.65 / DSM 816 / NCTC 3887 / NRRL 1 / QM 1276 / 107).